The chain runs to 288 residues: Bifunctional protein FolD (288 aa).

NADP(+) contacts are provided by residues 166–168, Ser-191, and Ile-232; that span reads GRS.

It belongs to the tetrahydrofolate dehydrogenase/cyclohydrolase family. As to quaternary structure, homodimer.

It carries out the reaction (6R)-5,10-methylene-5,6,7,8-tetrahydrofolate + NADP(+) = (6R)-5,10-methenyltetrahydrofolate + NADPH. The enzyme catalyses (6R)-5,10-methenyltetrahydrofolate + H2O = (6R)-10-formyltetrahydrofolate + H(+). It functions in the pathway one-carbon metabolism; tetrahydrofolate interconversion. In terms of biological role, catalyzes the oxidation of 5,10-methylenetetrahydrofolate to 5,10-methenyltetrahydrofolate and then the hydrolysis of 5,10-methenyltetrahydrofolate to 10-formyltetrahydrofolate. This is Bifunctional protein FolD from Rickettsia massiliae (strain Mtu5).